Reading from the N-terminus, the 211-residue chain is Orotidine 5'-phosphate decarboxylase (211 aa).

Substrate is bound by residues Asp7, Lys29, 57-66, Ser109, 162-172, Gly185, and Arg186; these read DLKLADIPNT and PGIGAQGGSPV. The active-site Proton donor is the Lys59.

This sequence belongs to the OMP decarboxylase family. Type 1 subfamily. As to quaternary structure, homodimer.

The catalysed reaction is orotidine 5'-phosphate + H(+) = UMP + CO2. Its pathway is pyrimidine metabolism; UMP biosynthesis via de novo pathway; UMP from orotate: step 2/2. Functionally, catalyzes the decarboxylation of orotidine 5'-monophosphate (OMP) to uridine 5'-monophosphate (UMP). This Pyrococcus furiosus (strain ATCC 43587 / DSM 3638 / JCM 8422 / Vc1) protein is Orotidine 5'-phosphate decarboxylase.